The primary structure comprises 168 residues: Large ribosomal subunit protein uL10 (168 aa).

The protein belongs to the universal ribosomal protein uL10 family. In terms of assembly, part of the ribosomal stalk of the 50S ribosomal subunit. The N-terminus interacts with L11 and the large rRNA to form the base of the stalk. The C-terminus forms an elongated spine to which L12 dimers bind in a sequential fashion forming a multimeric L10(L12)X complex.

Functionally, forms part of the ribosomal stalk, playing a central role in the interaction of the ribosome with GTP-bound translation factors. This is Large ribosomal subunit protein uL10 from Clostridium acetobutylicum (strain ATCC 824 / DSM 792 / JCM 1419 / IAM 19013 / LMG 5710 / NBRC 13948 / NRRL B-527 / VKM B-1787 / 2291 / W).